We begin with the raw amino-acid sequence, 105 residues long: Large ribosomal subunit protein uL24 (105 aa).

Belongs to the universal ribosomal protein uL24 family. As to quaternary structure, part of the 50S ribosomal subunit.

Functionally, one of two assembly initiator proteins, it binds directly to the 5'-end of the 23S rRNA, where it nucleates assembly of the 50S subunit. One of the proteins that surrounds the polypeptide exit tunnel on the outside of the subunit. The chain is Large ribosomal subunit protein uL24 from Psychrobacter sp. (strain PRwf-1).